We begin with the raw amino-acid sequence, 54 residues long: UPF0391 membrane protein PFL_0093 (54 aa).

2 helical membrane-spanning segments follow: residues 4–24 and 29–49; these read WAITFLIIAIVAAVLGFGGIA and GIAKILFVVFLVMFIASFFFG.

It belongs to the UPF0391 family.

The protein resides in the cell membrane. The sequence is that of UPF0391 membrane protein PFL_0093 from Pseudomonas fluorescens (strain ATCC BAA-477 / NRRL B-23932 / Pf-5).